A 444-amino-acid polypeptide reads, in one-letter code: Glycoprotein GX (444 aa).

A signal peptide spans 1–24 (MPAARTGTLAAVALILLCGAAVLG). Asparagine 117, asparagine 240, and asparagine 335 each carry an N-linked (GlcNAc...) asparagine; by host glycan. Residues 390 to 414 (GILIGLAIALLVLLFSLVIVLVCAC) traverse the membrane as a helical segment.

The protein belongs to the herpesviridae glycoprotein G family.

The protein resides in the membrane. This chain is Glycoprotein GX, found in Bos taurus (Bovine).